Reading from the N-terminus, the 125-residue chain is MADTKPAAKAAPETSDAYAIVEASGTQIWLQTNRYYDLDRLQADVDETLKLDNVLLVKDSKGTTLGQPYVKDASVELKVMAHRRGPKVIVYKMRPKKKTRRKNGHRQELTRVMVQSISVGGKAIG.

This sequence belongs to the bacterial ribosomal protein bL21 family. In terms of assembly, part of the 50S ribosomal subunit. Contacts protein L20.

In terms of biological role, this protein binds to 23S rRNA in the presence of protein L20. This Synechococcus sp. (strain CC9902) protein is Large ribosomal subunit protein bL21.